The chain runs to 389 residues: Alpha-2B adrenergic receptor (389 aa).

The helical transmembrane segment at 1-25 (AIAAVITFLILFTIFGNALVILAVL) threads the bilayer. Over 26–36 (TSRSLRAPQNL) the chain is Cytoplasmic. A helical transmembrane segment spans residues 37 to 62 (FLVSLAAADILVATLIIPFSLANELL). Residues 63 to 72 (GYWYFRRTWC) are Extracellular-facing. A disulfide bridge connects residues C72 and C151. Residues 73-95 (EVYLALDVLFCTSSIVHLCAISL) traverse the membrane as a helical segment. Residues 96-117 (DRYWAVTRALEYNTKRTPRRIK) are Cytoplasmic-facing. The helical transmembrane segment at 118–140 (CIILTVWLIAAVISLPPLIYKGD) threads the bilayer. Topologically, residues 141–156 (QGPQPRGRPQCKLNQE) are extracellular. Residues 157 to 180 (AWYILASSIGSFFAPCLIMILVYL) form a helical membrane-spanning segment. Residues 181–363 (RIYLIAKRSH…LTREKRFTFV (183 aa)) are Cytoplasmic-facing. Disordered regions lie at residues 194 to 216 (PRAK…AGAS) and 233 to 320 (EANG…PLQQ). A compositionally biased stretch (gly residues) spans 196 to 205 (AKGGPGGGGS). Over residues 255 to 267 (PALPSSWPALPSS) the composition is skewed to low complexity. Residues 280–302 (LEEEAEEEEEEEEEEEEGEEECE) are compositionally biased toward acidic residues. Over residues 303-320 (PQALPASPASACSPPLQQ) the composition is skewed to low complexity. A helical membrane pass occupies residues 364-387 (LAVVIGVFVLCWFPFFFSYSLGAI). Residues 388 to 389 (CP) lie on the Extracellular side of the membrane.

It belongs to the G-protein coupled receptor 1 family. Adrenergic receptor subfamily. ADRA2B sub-subfamily. In terms of assembly, interacts with RAB26. Interacts with PPP1R9B. Interacts with GGA1, GGA2 and GGA3.

Its subcellular location is the cell membrane. Functionally, alpha-2 adrenergic receptors mediate the catecholamine-induced inhibition of adenylate cyclase through the action of G proteins. This chain is Alpha-2B adrenergic receptor (ADRA2B), found in Equus caballus (Horse).